The following is a 2259-amino-acid chain: Golgin subfamily A member 4 (2259 aa).

The tract at residues 1-54 is disordered; sequence MFKKLKQKISEEQQQLQQALAPAQASSSSSTPTRTRSRTSSFTDQLDDATPNRE. S10 is modified (phosphoserine). The span at 12 to 41 shows a compositional bias: low complexity; the sequence is EQQQLQQALAPAQASSSSSTPTRTRSRTSS. Residue T39 is modified to Phosphothreonine. Phosphoserine occurs at positions 41, 104, and 111. An interaction with MACF1 region spans residues 165–235; sequence SLSREQLLQR…EELQMDQQAK (71 aa). A coiled-coil region spans residues 167–2182; it reads SREQLLQRLR…SYEKSVCAAA (2016 aa). 2 stretches are compositionally biased toward basic and acidic residues: residues 1932–1946 and 1954–1977; these read LEDRPEENSKSHVIE and DGRHSDLESKLAGSEREKQKLSKE. Residues 1932-1977 are disordered; sequence LEDRPEENSKSHVIESKLGTPMDGRHSDLESKLAGSEREKQKLSKE. A GRIP domain is found at 2199–2246; sequence LFGEPTEFEYLRKVLFEYMMGRETKTMAKVITTVLRFPDDQAQKILER.

Homodimer. Interacts with GTP-bound ARL1 and ARL3. Interacts with MACF1. Directly interacts with TBC1D23. Interacts with FAM91A1; this interaction may be mediated by TBC1D23. In terms of tissue distribution, expressed in the head of epididymal sperm but not in testicular sperm (at protein level).

Its subcellular location is the cytoplasm. It localises to the golgi apparatus membrane. The protein localises to the golgi apparatus. The protein resides in the trans-Golgi network membrane. Its function is as follows. Involved in vesicular trafficking at the Golgi apparatus level. May play a role in delivery of transport vesicles containing GPI-linked proteins from the trans-Golgi network through its interaction with MACF1. Involved in endosome-to-Golgi trafficking. The chain is Golgin subfamily A member 4 from Rattus norvegicus (Rat).